A 245-amino-acid chain; its full sequence is 1-(5-phosphoribosyl)-5-[(5-phosphoribosylamino)methylideneamino] imidazole-4-carboxamide isomerase (245 aa).

Asp-8 serves as the catalytic Proton acceptor. Asp-129 (proton donor) is an active-site residue.

The protein belongs to the HisA/HisF family.

The protein resides in the cytoplasm. It carries out the reaction 1-(5-phospho-beta-D-ribosyl)-5-[(5-phospho-beta-D-ribosylamino)methylideneamino]imidazole-4-carboxamide = 5-[(5-phospho-1-deoxy-D-ribulos-1-ylimino)methylamino]-1-(5-phospho-beta-D-ribosyl)imidazole-4-carboxamide. Its pathway is amino-acid biosynthesis; L-histidine biosynthesis; L-histidine from 5-phospho-alpha-D-ribose 1-diphosphate: step 4/9. This is 1-(5-phosphoribosyl)-5-[(5-phosphoribosylamino)methylideneamino] imidazole-4-carboxamide isomerase from Rhodopseudomonas palustris (strain HaA2).